The following is a 226-amino-acid chain: ATP synthase F(0) complex subunit a (226 aa).

6 helical membrane passes run 12-32, 68-88, 97-117, 138-158, 182-202, and 203-223; these read PTVL…LLIP, WSLM…LGLL, QLSM…AMGL, IPML…ALAV, LAIN…LTIL, and ETAI…LYLH.

The protein belongs to the ATPase A chain family. Component of the ATP synthase complex composed at least of ATP5F1A/subunit alpha, ATP5F1B/subunit beta, ATP5MC1/subunit c (homooctomer), MT-ATP6/subunit a, MT-ATP8/subunit 8, ATP5ME/subunit e, ATP5MF/subunit f, ATP5MG/subunit g, ATP5MK/subunit k, ATP5MJ/subunit j, ATP5F1C/subunit gamma, ATP5F1D/subunit delta, ATP5F1E/subunit epsilon, ATP5PF/subunit F6, ATP5PB/subunit b, ATP5PD/subunit d, ATP5PO/subunit OSCP. ATP synthase complex consists of a soluble F(1) head domain (subunits alpha(3) and beta(3)) - the catalytic core - and a membrane F(0) domain - the membrane proton channel (subunits c, a, 8, e, f, g, k and j). These two domains are linked by a central stalk (subunits gamma, delta, and epsilon) rotating inside the F1 region and a stationary peripheral stalk (subunits F6, b, d, and OSCP). Interacts with DNAJC30; interaction is direct.

The protein localises to the mitochondrion inner membrane. It carries out the reaction H(+)(in) = H(+)(out). In terms of biological role, subunit a, of the mitochondrial membrane ATP synthase complex (F(1)F(0) ATP synthase or Complex V) that produces ATP from ADP in the presence of a proton gradient across the membrane which is generated by electron transport complexes of the respiratory chain. ATP synthase complex consist of a soluble F(1) head domain - the catalytic core - and a membrane F(1) domain - the membrane proton channel. These two domains are linked by a central stalk rotating inside the F(1) region and a stationary peripheral stalk. During catalysis, ATP synthesis in the catalytic domain of F(1) is coupled via a rotary mechanism of the central stalk subunits to proton translocation. With the subunit c (ATP5MC1), forms the proton-conducting channel in the F(0) domain, that contains two crucial half-channels (inlet and outlet) that facilitate proton movement from the mitochondrial intermembrane space (IMS) into the matrix. Protons are taken up via the inlet half-channel and released through the outlet half-channel, following a Grotthuss mechanism. The chain is ATP synthase F(0) complex subunit a from Pongo abelii (Sumatran orangutan).